The following is a 363-amino-acid chain: MNTEASQDQTVTETPGVRLRQARESLGLTQQTVAERLCLKVSTIRDIEEDNAQANLASTFHRGYIRSYAKLVHLPEDELLPILEKQAPVRAAKVAPMQSFSLGKKHKKRDGWLMSFTWLIVLVVLGLTGAWWWQNHQAQQAEIANMVDQSSAQLSQNGGQPVPLTDDNRDAIAPTDAPAPVANGQPVPLTNHSVSAITNSAPTTSSVPTTSSATTSSVPTTSSVPKINSTEPVDTANTNTTMHQEGAASAAVSPSQVPQPGMPTGQPPLPTADAGVSGSASSVGALVMNFTADCWLQVVDATGKTLFSGIQKGGAVLNLAGKAPYKLTIGAPGALTISYQGNPVDLSKFIKANRVARLTVGVE.

Topologically, residues 1–111 are cytoplasmic; that stretch reads MNTEASQDQT…LGKKHKKRDG (111 aa). The HTH cro/C1-type domain occupies 19 to 79; it reads LRQARESLGL…KLVHLPEDEL (61 aa). The H-T-H motif DNA-binding region spans 30-49; that stretch reads QQTVAERLCLKVSTIRDIEE. Residues 112–132 form a helical; Signal-anchor for type II membrane protein membrane-spanning segment; that stretch reads WLMSFTWLIVLVVLGLTGAWW. The Periplasmic portion of the chain corresponds to 133–363; it reads WQNHQAQQAE…RVARLTVGVE (231 aa). The interval 151–277 is disordered; sequence SAQLSQNGGQ…PLPTADAGVS (127 aa). The span at 188 to 199 shows a compositional bias: polar residues; sequence PLTNHSVSAITN. The span at 200–225 shows a compositional bias: low complexity; that stretch reads SAPTTSSVPTTSSATTSSVPTTSSVP. The span at 226-243 shows a compositional bias: polar residues; that stretch reads KINSTEPVDTANTNTTMH. The span at 247 to 259 shows a compositional bias: low complexity; it reads AASAAVSPSQVPQ.

Belongs to the RodZ family.

It is found in the cell inner membrane. Functionally, cytoskeletal protein that is involved in cell-shape control through regulation of the length of the long axis. The protein is Cytoskeleton protein RodZ of Yersinia pseudotuberculosis serotype O:1b (strain IP 31758).